A 539-amino-acid polypeptide reads, in one-letter code: Sphingosine-1-phosphate lyase (539 aa).

The signal sequence occupies residues 1 to 46 (MELAMDFALRLRDAANHHLSRYEPLVLLAAPLLALLAARTLHAAAA). Residues 47–54 (AVADRGLR) are Lumenal-facing. Residues 55 to 75 (TVLLALAMTAIKLLPGVSAYI) traverse the membrane as a helical segment. The Cytoplasmic segment spans residues 76-539 (NAEKRKVVDQ…LLVEFMDASC (464 aa)). At lysine 344 the chain carries N6-(pyridoxal phosphate)lysine.

It belongs to the group II decarboxylase family. Sphingosine-1-phosphate lyase subfamily. It depends on pyridoxal 5'-phosphate as a cofactor.

The protein resides in the endoplasmic reticulum membrane. The enzyme catalyses sphinganine 1-phosphate = hexadecanal + phosphoethanolamine. The protein operates within lipid metabolism; sphingolipid metabolism. Cleaves phosphorylated sphingoid bases (PSBs), such as sphingosine-1-phosphate, into fatty aldehydes and phosphoethanolamine. Elevates stress-induced ceramide production and apoptosis. The sequence is that of Sphingosine-1-phosphate lyase (SPL) from Oryza sativa subsp. japonica (Rice).